We begin with the raw amino-acid sequence, 482 residues long: NADH-quinone oxidoreductase subunit N (482 aa).

14 helical membrane-spanning segments follow: residues 11-31, 37-57, 77-97, 106-126, 131-151, 166-186, 208-228, 255-275, 279-299, 304-324, 332-352, 376-396, 404-424, and 462-482; these read AVPE…GVFI, IPYY…WYIF, RFSV…FIYA, IPHT…VALV, LLTV…MVAL, FVIG…IFGA, LILV…LGTA, IAAY…LHVQ, MLIV…IVQS, MLAY…LCGT, MFYT…VVLM, AFMM…VGFI, ALIQ…AIVG, and LAVL…HLAF.

Belongs to the complex I subunit 2 family. As to quaternary structure, NDH-1 is composed of 14 different subunits. Subunits NuoA, H, J, K, L, M, N constitute the membrane sector of the complex.

Its subcellular location is the cell inner membrane. It catalyses the reaction a quinone + NADH + 5 H(+)(in) = a quinol + NAD(+) + 4 H(+)(out). Functionally, NDH-1 shuttles electrons from NADH, via FMN and iron-sulfur (Fe-S) centers, to quinones in the respiratory chain. The immediate electron acceptor for the enzyme in this species is believed to be ubiquinone. Couples the redox reaction to proton translocation (for every two electrons transferred, four hydrogen ions are translocated across the cytoplasmic membrane), and thus conserves the redox energy in a proton gradient. The chain is NADH-quinone oxidoreductase subunit N from Coxiella burnetii (strain RSA 493 / Nine Mile phase I).